The following is a 267-amino-acid chain: Hydroxyethylthiazole kinase (267 aa).

Methionine 51 provides a ligand contact to substrate. ATP-binding residues include arginine 127 and serine 173. Residue alanine 200 coordinates substrate.

This sequence belongs to the Thz kinase family. Mg(2+) serves as cofactor.

The enzyme catalyses 5-(2-hydroxyethyl)-4-methylthiazole + ATP = 4-methyl-5-(2-phosphooxyethyl)-thiazole + ADP + H(+). The protein operates within cofactor biosynthesis; thiamine diphosphate biosynthesis; 4-methyl-5-(2-phosphoethyl)-thiazole from 5-(2-hydroxyethyl)-4-methylthiazole: step 1/1. In terms of biological role, catalyzes the phosphorylation of the hydroxyl group of 4-methyl-5-beta-hydroxyethylthiazole (THZ). This Psychromonas ingrahamii (strain DSM 17664 / CCUG 51855 / 37) protein is Hydroxyethylthiazole kinase.